Reading from the N-terminus, the 366-residue chain is 3-dehydroquinate synthase (366 aa).

NAD(+) contacts are provided by residues 107–111 (GVIGD), 131–132 (TT), Lys-144, and Lys-153. Positions 186, 251, and 268 each coordinate Zn(2+).

This sequence belongs to the sugar phosphate cyclases superfamily. Dehydroquinate synthase family. The cofactor is Co(2+). Zn(2+) is required as a cofactor. It depends on NAD(+) as a cofactor.

Its subcellular location is the cytoplasm. The enzyme catalyses 7-phospho-2-dehydro-3-deoxy-D-arabino-heptonate = 3-dehydroquinate + phosphate. The protein operates within metabolic intermediate biosynthesis; chorismate biosynthesis; chorismate from D-erythrose 4-phosphate and phosphoenolpyruvate: step 2/7. Functionally, catalyzes the conversion of 3-deoxy-D-arabino-heptulosonate 7-phosphate (DAHP) to dehydroquinate (DHQ). The protein is 3-dehydroquinate synthase of Microcystis aeruginosa (strain NIES-843 / IAM M-2473).